The following is a 289-amino-acid chain: Phosphatidylserine decarboxylase proenzyme (289 aa).

Residues D92, H149, and S254 each act as charge relay system; for autoendoproteolytic cleavage activity in the active site. S254 functions as the Schiff-base intermediate with substrate; via pyruvic acid; for decarboxylase activity in the catalytic mechanism. S254 carries the post-translational modification Pyruvic acid (Ser); by autocatalysis.

Belongs to the phosphatidylserine decarboxylase family. PSD-B subfamily. Prokaryotic type I sub-subfamily. As to quaternary structure, heterodimer of a large membrane-associated beta subunit and a small pyruvoyl-containing alpha subunit. It depends on pyruvate as a cofactor. Is synthesized initially as an inactive proenzyme. Formation of the active enzyme involves a self-maturation process in which the active site pyruvoyl group is generated from an internal serine residue via an autocatalytic post-translational modification. Two non-identical subunits are generated from the proenzyme in this reaction, and the pyruvate is formed at the N-terminus of the alpha chain, which is derived from the carboxyl end of the proenzyme. The autoendoproteolytic cleavage occurs by a canonical serine protease mechanism, in which the side chain hydroxyl group of the serine supplies its oxygen atom to form the C-terminus of the beta chain, while the remainder of the serine residue undergoes an oxidative deamination to produce ammonia and the pyruvoyl prosthetic group on the alpha chain. During this reaction, the Ser that is part of the protease active site of the proenzyme becomes the pyruvoyl prosthetic group, which constitutes an essential element of the active site of the mature decarboxylase.

The protein resides in the cell membrane. The catalysed reaction is a 1,2-diacyl-sn-glycero-3-phospho-L-serine + H(+) = a 1,2-diacyl-sn-glycero-3-phosphoethanolamine + CO2. Its pathway is phospholipid metabolism; phosphatidylethanolamine biosynthesis; phosphatidylethanolamine from CDP-diacylglycerol: step 2/2. Functionally, catalyzes the formation of phosphatidylethanolamine (PtdEtn) from phosphatidylserine (PtdSer). The polypeptide is Phosphatidylserine decarboxylase proenzyme (Pseudomonas aeruginosa (strain LESB58)).